The sequence spans 151 residues: Large ribosomal subunit protein bL9 (151 aa).

The protein belongs to the bacterial ribosomal protein bL9 family.

Functionally, binds to the 23S rRNA. This Rhodococcus opacus (strain B4) protein is Large ribosomal subunit protein bL9.